The chain runs to 399 residues: MRFWFVLLALLGKEIYAYENERNALNATAANKVCGLSTYLKGIAHRVNSESAVVTEKLSDLKMRSIQLQLSVMRNRVPSGEQDCKDIRTLLKTVLRNEFTFQQELEEMRNASALAAAAAGLAAGRLEEWIFVFAQAAGRSSQFCISVGKTGPAEYNNLQECFDGTIGPETLYKIEDSRVKESAKTSLQLHEVLSSISFGSLGVKNIRGGNGKDGCNLVRTDTDGVLEGGSPTRHNLTWGGGVMNFGSYQNGSMYVEGGEYGDATEYGAVRWTEDPSKVSIFKDVIRLFARFQEAKNAVVKKIKTTVDELTKCIGQKEAELTNDQLYEEFIWETINRLELSKRVSEQSAFGEEEETIVKFNYTAEPVRGPFTVAGANAAAIHLSVSTAALCRSALLLGVL.

The signal sequence occupies residues 1–17 (MRFWFVLLALLGKEIYA). N-linked (GlcNAc...) asparagine glycosylation is found at Asn-26 and Asn-110. 3 cysteine pairs are disulfide-bonded: Cys-34–Cys-161, Cys-84–Cys-312, and Cys-144–Cys-215. Asn-235, Asn-250, and Asn-360 each carry an N-linked (GlcNAc...) asparagine glycan. Asn-376 carries GPI-anchor amidated asparagine lipidation. A propeptide spans 377 to 399 (AAAIHLSVSTAALCRSALLLGVL) (removed in mature form).

Heterodimer composed of ESAG6 and ESAG7. Post-translationally, N-glycosylated. Glycosylation is dispensable for heterodimer formation and host transferrin binding.

It is found in the cell membrane. It localises to the flagellar pocket. In terms of biological role, transferrin receptor subunit involved in receptor-mediated acquisition of iron from the environment by binding host TF/transferrin. The protein is Transferrin receptor subunit ESAG6 of Trypanosoma brucei brucei.